Reading from the N-terminus, the 357-residue chain is Chorismate synthase (357 aa).

The NADP(+) site is built by arginine 48 and arginine 54. FMN-binding positions include 125 to 127 (RSS), 238 to 239 (NA), glycine 278, 293 to 297 (KPTSS), and arginine 319.

This sequence belongs to the chorismate synthase family. As to quaternary structure, homotetramer. FMNH2 is required as a cofactor.

The catalysed reaction is 5-O-(1-carboxyvinyl)-3-phosphoshikimate = chorismate + phosphate. Its pathway is metabolic intermediate biosynthesis; chorismate biosynthesis; chorismate from D-erythrose 4-phosphate and phosphoenolpyruvate: step 7/7. In terms of biological role, catalyzes the anti-1,4-elimination of the C-3 phosphate and the C-6 proR hydrogen from 5-enolpyruvylshikimate-3-phosphate (EPSP) to yield chorismate, which is the branch point compound that serves as the starting substrate for the three terminal pathways of aromatic amino acid biosynthesis. This reaction introduces a second double bond into the aromatic ring system. The polypeptide is Chorismate synthase (Blochmanniella floridana).